We begin with the raw amino-acid sequence, 446 residues long: tRNA modification GTPase MnmE (446 aa).

3 residues coordinate (6S)-5-formyl-5,6,7,8-tetrahydrofolate: arginine 24, glutamate 81, and lysine 120. In terms of domain architecture, TrmE-type G spans 216–368; that stretch reads GLHAVLIGPP…LHIRLRELAL (153 aa). Residue asparagine 226 coordinates K(+). GTP-binding positions include 226-231, 245-251, and 270-273; these read NAGKSS, TDVAGTT, and DTAG. Residue serine 230 coordinates Mg(2+). The K(+) site is built by threonine 245, valine 247, and threonine 250. Threonine 251 lines the Mg(2+) pocket. (6S)-5-formyl-5,6,7,8-tetrahydrofolate is bound at residue lysine 446.

This sequence belongs to the TRAFAC class TrmE-Era-EngA-EngB-Septin-like GTPase superfamily. TrmE GTPase family. Homodimer. Heterotetramer of two MnmE and two MnmG subunits. It depends on K(+) as a cofactor.

The protein resides in the cytoplasm. Its function is as follows. Exhibits a very high intrinsic GTPase hydrolysis rate. Involved in the addition of a carboxymethylaminomethyl (cmnm) group at the wobble position (U34) of certain tRNAs, forming tRNA-cmnm(5)s(2)U34. The chain is tRNA modification GTPase MnmE from Xanthomonas oryzae pv. oryzae (strain MAFF 311018).